A 152-amino-acid chain; its full sequence is Deoxyuridine 5'-triphosphate nucleotidohydrolase (152 aa).

Substrate-binding positions include 71–73 (RSG), Asn-84, 88–90 (LID), and Met-98.

The protein belongs to the dUTPase family. Mg(2+) is required as a cofactor.

The enzyme catalyses dUTP + H2O = dUMP + diphosphate + H(+). It participates in pyrimidine metabolism; dUMP biosynthesis; dUMP from dCTP (dUTP route): step 2/2. Its function is as follows. This enzyme is involved in nucleotide metabolism: it produces dUMP, the immediate precursor of thymidine nucleotides and it decreases the intracellular concentration of dUTP so that uracil cannot be incorporated into DNA. The protein is Deoxyuridine 5'-triphosphate nucleotidohydrolase of Shewanella sp. (strain MR-7).